We begin with the raw amino-acid sequence, 128 residues long: Glycine cleavage system H protein (128 aa).

Positions 24-106 constitute a Lipoyl-binding domain; it reads VYTVGITEHA…YAEGFLFQIK (83 aa). Lys-65 bears the N6-lipoyllysine mark.

It belongs to the GcvH family. The glycine cleavage system is composed of four proteins: P, T, L and H. The cofactor is (R)-lipoate.

Its function is as follows. The glycine cleavage system catalyzes the degradation of glycine. The H protein shuttles the methylamine group of glycine from the P protein to the T protein. The protein is Glycine cleavage system H protein of Serratia proteamaculans (strain 568).